The chain runs to 884 residues: Alanine--tRNA ligase (884 aa).

Residues histidine 565, histidine 569, cysteine 675, and histidine 679 each contribute to the Zn(2+) site.

The protein belongs to the class-II aminoacyl-tRNA synthetase family. Zn(2+) is required as a cofactor.

It is found in the cytoplasm. It catalyses the reaction tRNA(Ala) + L-alanine + ATP = L-alanyl-tRNA(Ala) + AMP + diphosphate. Its function is as follows. Catalyzes the attachment of alanine to tRNA(Ala) in a two-step reaction: alanine is first activated by ATP to form Ala-AMP and then transferred to the acceptor end of tRNA(Ala). Also edits incorrectly charged Ser-tRNA(Ala) and Gly-tRNA(Ala) via its editing domain. This Maricaulis maris (strain MCS10) (Caulobacter maris) protein is Alanine--tRNA ligase.